Reading from the N-terminus, the 198-residue chain is Probable GTP-binding protein EngB (198 aa).

The region spanning aspartate 22 to threonine 195 is the EngB-type G domain. GTP is bound by residues glycine 30–serine 37, glycine 57–threonine 61, aspartate 75–glycine 78, threonine 142–aspartate 145, and phenylalanine 174–serine 176. Serine 37 and threonine 59 together coordinate Mg(2+).

The protein belongs to the TRAFAC class TrmE-Era-EngA-EngB-Septin-like GTPase superfamily. EngB GTPase family. Requires Mg(2+) as cofactor.

Its function is as follows. Necessary for normal cell division and for the maintenance of normal septation. The protein is Probable GTP-binding protein EngB of Bacillus mycoides (strain KBAB4) (Bacillus weihenstephanensis).